A 254-amino-acid chain; its full sequence is 4-hydroxy-tetrahydrodipicolinate reductase (254 aa).

NAD(+) contacts are provided by residues 8-13, 87-89, and 111-114; these read GASGKM, GTT, and ATNM. His-143 functions as the Proton donor/acceptor in the catalytic mechanism. His-144 serves as a coordination point for (S)-2,3,4,5-tetrahydrodipicolinate. Lys-147 (proton donor) is an active-site residue. Residue 153-154 coordinates (S)-2,3,4,5-tetrahydrodipicolinate; that stretch reads GT.

It belongs to the DapB family.

It is found in the cytoplasm. It catalyses the reaction (S)-2,3,4,5-tetrahydrodipicolinate + NAD(+) + H2O = (2S,4S)-4-hydroxy-2,3,4,5-tetrahydrodipicolinate + NADH + H(+). The catalysed reaction is (S)-2,3,4,5-tetrahydrodipicolinate + NADP(+) + H2O = (2S,4S)-4-hydroxy-2,3,4,5-tetrahydrodipicolinate + NADPH + H(+). Its pathway is amino-acid biosynthesis; L-lysine biosynthesis via DAP pathway; (S)-tetrahydrodipicolinate from L-aspartate: step 4/4. Its function is as follows. Catalyzes the conversion of 4-hydroxy-tetrahydrodipicolinate (HTPA) to tetrahydrodipicolinate. This is 4-hydroxy-tetrahydrodipicolinate reductase from Campylobacter fetus subsp. fetus (strain 82-40).